Here is a 359-residue protein sequence, read N- to C-terminus: DNA integrity scanning protein DisA (359 aa).

A DAC domain is found at 7–146 (DEVLRQTLAI…NRRYVLEGSD (140 aa)). Residues G74, L92, and 105–109 (TRHRT) each bind ATP.

This sequence belongs to the DisA family. In terms of assembly, homooctamer. Mg(2+) serves as cofactor.

It catalyses the reaction 2 ATP = 3',3'-c-di-AMP + 2 diphosphate. Its function is as follows. Participates in a DNA-damage check-point. DisA forms globular foci that rapidly scan along the chromosomes searching for lesions. Also has diadenylate cyclase activity, catalyzing the condensation of 2 ATP molecules into cyclic di-AMP (c-di-AMP). c-di-AMP likely acts as a signaling molecule that may couple DNA integrity with a cellular process. This Kineococcus radiotolerans (strain ATCC BAA-149 / DSM 14245 / SRS30216) protein is DNA integrity scanning protein DisA.